Here is a 637-residue protein sequence, read N- to C-terminus: Chaperone protein HtpG (637 aa).

Residues methionine 1–arginine 345 are a; substrate-binding. Positions glutamate 346 to lysine 562 are b. Residues leucine 563–lysine 637 form a c region.

The protein belongs to the heat shock protein 90 family. As to quaternary structure, homodimer.

The protein localises to the cytoplasm. Molecular chaperone. Has ATPase activity. In Shewanella baltica (strain OS155 / ATCC BAA-1091), this protein is Chaperone protein HtpG.